A 624-amino-acid chain; its full sequence is DNA mismatch repair protein MutL (624 aa).

It belongs to the DNA mismatch repair MutL/HexB family.

Functionally, this protein is involved in the repair of mismatches in DNA. It is required for dam-dependent methyl-directed DNA mismatch repair. May act as a 'molecular matchmaker', a protein that promotes the formation of a stable complex between two or more DNA-binding proteins in an ATP-dependent manner without itself being part of a final effector complex. The chain is DNA mismatch repair protein MutL from Chlorobium phaeobacteroides (strain DSM 266 / SMG 266 / 2430).